The primary structure comprises 506 residues: 5-OH-xanthotoxin synthase (506 aa).

A helical transmembrane segment spans residues 3 to 23 (PVVIFLVLAFPIASVYLLFYH). Residues 365 to 370 (TGPLLI) are substrate specificity. Cysteine 446 is a heme binding site.

This sequence belongs to the cytochrome P450 family. The cofactor is heme.

Its subcellular location is the microsome membrane. It carries out the reaction xanthotoxin + reduced [NADPH--hemoprotein reductase] + O2 = 5-hydroxyxanthotoxin + oxidized [NADPH--hemoprotein reductase] + H2O + 2 H(+). It participates in secondary metabolite biosynthesis. In terms of biological role, involved in the biosynthesis of coumarins and furanocoumarins (FCs), natural products required for defense responses against attacks by predators with potential medical and agroindustrial usages such as anticoagulant, rodenticide and artificial vanilla substitutes. Catalyzes the conversion of xanthotoxin into 5-hydroxyxanthotoxin. This Pastinaca sativa (Wild parsnip) protein is 5-OH-xanthotoxin synthase.